The following is a 430-amino-acid chain: Glutamate-1-semialdehyde 2,1-aminomutase (430 aa).

An N6-(pyridoxal phosphate)lysine modification is found at lysine 268.

The protein belongs to the class-III pyridoxal-phosphate-dependent aminotransferase family. HemL subfamily. In terms of assembly, homodimer. The cofactor is pyridoxal 5'-phosphate.

It localises to the cytoplasm. It catalyses the reaction (S)-4-amino-5-oxopentanoate = 5-aminolevulinate. The protein operates within porphyrin-containing compound metabolism; protoporphyrin-IX biosynthesis; 5-aminolevulinate from L-glutamyl-tRNA(Glu): step 2/2. This chain is Glutamate-1-semialdehyde 2,1-aminomutase (hemL), found in Bacillus subtilis (strain 168).